A 413-amino-acid chain; its full sequence is Bestrophin homolog 13 (413 aa).

Transmembrane regions (helical) follow at residues 29–49, 72–92, 236–256, and 272–292; these read LIYL…IDLI, SYTR…NVVA, LVYT…TLFG, and LVVP…FKVG.

The protein belongs to the anion channel-forming bestrophin (TC 1.A.46) family. Calcium-sensitive chloride channel subfamily. Forms oligomers.

The protein localises to the cell membrane. Forms chloride channels. This is Bestrophin homolog 13 (best-13) from Caenorhabditis elegans.